A 437-amino-acid chain; its full sequence is Adenylosuccinate synthetase (437 aa).

Residues 12–18 and 40–42 contribute to the GTP site; these read GDEGKGK and GHT. The active-site Proton acceptor is the D13. The Mg(2+) site is built by D13 and G40. IMP contacts are provided by residues 13–16, 38–41, T128, R142, Q223, T238, and R302; these read DEGK and NAGH. H41 (proton donor) is an active-site residue. 298 to 304 serves as a coordination point for substrate; that stretch reads TTTGRRR. GTP is bound by residues R304, 330 to 332, and 412 to 414; these read KLD and SLG.

The protein belongs to the adenylosuccinate synthetase family. Homodimer. Mg(2+) serves as cofactor.

The protein resides in the cytoplasm. It catalyses the reaction IMP + L-aspartate + GTP = N(6)-(1,2-dicarboxyethyl)-AMP + GDP + phosphate + 2 H(+). It functions in the pathway purine metabolism; AMP biosynthesis via de novo pathway; AMP from IMP: step 1/2. Plays an important role in the de novo pathway of purine nucleotide biosynthesis. Catalyzes the first committed step in the biosynthesis of AMP from IMP. This Synechococcus sp. (strain RCC307) protein is Adenylosuccinate synthetase.